We begin with the raw amino-acid sequence, 157 residues long: MFDILMYLFENYVHSEVELLVDEDELTKELTRAGFHQSEIIKALSWLERLADLQEAGTPYLCNHDQQSFRIYTKAEMEKIDVESRGFLLFLEQIKVLSVEIREMVIDRVMEIDEPTLNLDDIKWVILMVLFNAPGHESAYEQMEDLIFEQPDGRLHS.

Belongs to the Smg family.

The polypeptide is Protein Smg homolog (Shewanella pealeana (strain ATCC 700345 / ANG-SQ1)).